We begin with the raw amino-acid sequence, 83 residues long: Small ribosomal subunit protein bS16 (83 aa).

This sequence belongs to the bacterial ribosomal protein bS16 family.

The polypeptide is Small ribosomal subunit protein bS16 (Pseudomonas aeruginosa (strain UCBPP-PA14)).